We begin with the raw amino-acid sequence, 600 residues long: Tripeptidyl-peptidase 1 (600 aa).

The first 22 residues, Met1–Cys22, serve as a signal peptide directing secretion. The propeptide at Lys23–Gly220 is removed in mature form. Residues Asn91, Asn259, and Asn266 are each glycosylated (N-linked (GlcNAc...) asparagine). In terms of domain architecture, Peptidase S53 spans Tyr248–Glu600. Residues Glu318 and Asp322 each act as charge relay system in the active site. Cysteines 411 and 570 form a disulfide. 2 N-linked (GlcNAc...) asparagine glycosylation sites follow: Asn475 and Asn483. Ser514 (charge relay system) is an active-site residue. Ca(2+) is bound by residues Asp559, Ile560, Gly579, and Asp581.

Monomer. The cofactor is Ca(2+). Activated by autocatalytic proteolytical processing upon acidification. N-glycosylation is required for processing and activity.

It localises to the secreted. The enzyme catalyses Release of an N-terminal tripeptide from a polypeptide, but also has endopeptidase activity.. Its function is as follows. Serine protease with tripeptidyl-peptidase I activity. In Dictyostelium discoideum (Social amoeba), this protein is Tripeptidyl-peptidase 1 (tpp1).